We begin with the raw amino-acid sequence, 208 residues long: Sec-independent protein translocase protein TatB (208 aa).

The helical transmembrane segment at 1 to 21 threads the bilayer; sequence MFDIGVGELTLIAVVALVVLG. The segment at 188–208 is disordered; sequence DAGTPAASMPSAPAKIQEKQP.

The protein belongs to the TatB family. In terms of assembly, the Tat system comprises two distinct complexes: a TatABC complex, containing multiple copies of TatA, TatB and TatC subunits, and a separate TatA complex, containing only TatA subunits. Substrates initially bind to the TatABC complex, which probably triggers association of the separate TatA complex to form the active translocon.

It localises to the cell inner membrane. Part of the twin-arginine translocation (Tat) system that transports large folded proteins containing a characteristic twin-arginine motif in their signal peptide across membranes. Together with TatC, TatB is part of a receptor directly interacting with Tat signal peptides. TatB may form an oligomeric binding site that transiently accommodates folded Tat precursor proteins before their translocation. This chain is Sec-independent protein translocase protein TatB, found in Xanthomonas axonopodis pv. citri (strain 306).